We begin with the raw amino-acid sequence, 310 residues long: Methionyl-tRNA formyltransferase (310 aa).

Residue 109–112 participates in (6S)-5,6,7,8-tetrahydrofolate binding; it reads SLLP.

This sequence belongs to the Fmt family.

The catalysed reaction is L-methionyl-tRNA(fMet) + (6R)-10-formyltetrahydrofolate = N-formyl-L-methionyl-tRNA(fMet) + (6S)-5,6,7,8-tetrahydrofolate + H(+). Its function is as follows. Attaches a formyl group to the free amino group of methionyl-tRNA(fMet). The formyl group appears to play a dual role in the initiator identity of N-formylmethionyl-tRNA by promoting its recognition by IF2 and preventing the misappropriation of this tRNA by the elongation apparatus. The polypeptide is Methionyl-tRNA formyltransferase (Alkaliphilus oremlandii (strain OhILAs) (Clostridium oremlandii (strain OhILAs))).